We begin with the raw amino-acid sequence, 283 residues long: Acetylglutamate kinase (283 aa).

Substrate contacts are provided by residues 63–64, Arg85, and Asn178; that span reads GG.

It belongs to the acetylglutamate kinase family. ArgB subfamily.

Its subcellular location is the cytoplasm. The catalysed reaction is N-acetyl-L-glutamate + ATP = N-acetyl-L-glutamyl 5-phosphate + ADP. It participates in amino-acid biosynthesis; L-arginine biosynthesis; N(2)-acetyl-L-ornithine from L-glutamate: step 2/4. Its function is as follows. Catalyzes the ATP-dependent phosphorylation of N-acetyl-L-glutamate. The chain is Acetylglutamate kinase from Prochlorococcus marinus (strain MIT 9301).